Consider the following 145-residue polypeptide: Ribonuclease H (145 aa).

The 142-residue stretch at 1–142 (MKEVVIYTDG…CDEIARSMIK (142 aa)) folds into the RNase H type-1 domain. Residues Asp-9, Glu-47, Asp-69, and Asp-134 each coordinate Mg(2+).

Belongs to the RNase H family. Monomer. It depends on Mg(2+) as a cofactor.

It is found in the cytoplasm. The catalysed reaction is Endonucleolytic cleavage to 5'-phosphomonoester.. In terms of biological role, endonuclease that specifically degrades the RNA of RNA-DNA hybrids. The sequence is that of Ribonuclease H from Caldicellulosiruptor saccharolyticus (strain ATCC 43494 / DSM 8903 / Tp8T 6331).